The sequence spans 161 residues: Phosphopantetheine adenylyltransferase (161 aa).

S10 contacts substrate. ATP-binding positions include 10 to 11 and H18; that span reads SF. Substrate-binding residues include K42, A75, and R89. ATP-binding positions include 90-92, E100, and 125-131; these read GLR and LSPISSS.

This sequence belongs to the bacterial CoaD family. Homohexamer. The cofactor is Mg(2+).

The protein localises to the cytoplasm. The enzyme catalyses (R)-4'-phosphopantetheine + ATP + H(+) = 3'-dephospho-CoA + diphosphate. It participates in cofactor biosynthesis; coenzyme A biosynthesis; CoA from (R)-pantothenate: step 4/5. Its function is as follows. Reversibly transfers an adenylyl group from ATP to 4'-phosphopantetheine, yielding dephospho-CoA (dPCoA) and pyrophosphate. The protein is Phosphopantetheine adenylyltransferase of Streptococcus agalactiae serotype III (strain NEM316).